The primary structure comprises 299 residues: ATP phosphoribosyltransferase (299 aa).

This sequence belongs to the ATP phosphoribosyltransferase family. Long subfamily. It depends on Mg(2+) as a cofactor.

The protein localises to the cytoplasm. The enzyme catalyses 1-(5-phospho-beta-D-ribosyl)-ATP + diphosphate = 5-phospho-alpha-D-ribose 1-diphosphate + ATP. Its pathway is amino-acid biosynthesis; L-histidine biosynthesis; L-histidine from 5-phospho-alpha-D-ribose 1-diphosphate: step 1/9. With respect to regulation, feedback inhibited by histidine. Catalyzes the condensation of ATP and 5-phosphoribose 1-diphosphate to form N'-(5'-phosphoribosyl)-ATP (PR-ATP). Has a crucial role in the pathway because the rate of histidine biosynthesis seems to be controlled primarily by regulation of HisG enzymatic activity. In Pasteurella multocida (strain Pm70), this protein is ATP phosphoribosyltransferase (hisG).